Consider the following 368-residue polypeptide: Phosphate acyltransferase (368 aa).

A disordered region spans residues 337–368 (LGDGEHDAGGAGQASPAAGHHAEPSAAQSSKA).

It belongs to the PlsX family. As to quaternary structure, homodimer. Probably interacts with PlsY.

It is found in the cytoplasm. The catalysed reaction is a fatty acyl-[ACP] + phosphate = an acyl phosphate + holo-[ACP]. It functions in the pathway lipid metabolism; phospholipid metabolism. Catalyzes the reversible formation of acyl-phosphate (acyl-PO(4)) from acyl-[acyl-carrier-protein] (acyl-ACP). This enzyme utilizes acyl-ACP as fatty acyl donor, but not acyl-CoA. The polypeptide is Phosphate acyltransferase (Burkholderia orbicola (strain MC0-3)).